The chain runs to 372 residues: 2,7-anhydro-N-acetylneuraminate hydratase (372 aa).

Tyr-11, Phe-12, Asp-33, Asn-36, Thr-68, Asn-70, His-73, Glu-90, Lys-91, and Trp-160 together coordinate NAD(+).

Belongs to the Gfo/Idh/MocA family. As to quaternary structure, homodimer. The cofactor is NAD(+).

The catalysed reaction is N-acetyl-2,7-anhydro-alpha-neuraminate + H2O = N-acetyl-alpha-neuraminate. It catalyses the reaction 2-deoxy-2,3-dehydro-N-acetylneuraminate + H2O = N-acetyl-alpha-neuraminate. Its activity is regulated as follows. All conversions require NAD(+) as a cofactor, which is regenerated in the reaction. The presence of EGTA and several divalent cations does not affect the activity. Functionally, hydratase involved in the degradation of sialic acids. Catalyzes the reversible conversion of the dehydrated form of N-acetylneuraminate (Neu5Ac), 2,7-anhydro-N-acetylneuraminate (2,7-AN), to Neu5Ac. Also catalyzes the irreversible conversion of 2-deoxy-2,3-didehydro-N-acetylneuraminate (2,3-EN) to Neu5Ac. The reaction mechanism involves keto intermediates and the transient formation of NADH. In Escherichia coli (strain K12), this protein is 2,7-anhydro-N-acetylneuraminate hydratase.